Reading from the N-terminus, the 388-residue chain is Putative N(4)-(beta-N-acetylglucosaminyl)-L-asparaginase GL17147 (388 aa).

The signal sequence occupies residues 1–20 (MYKAQYLWLFGLVLISRSAT). Intrachain disulfides connect Cys-94–Cys-99 and Cys-193–Cys-209. Thr-240 (nucleophile) is an active-site residue. Substrate is bound by residues 268-271 (RVGD) and 291-294 (TGDG). A disulfide bond links Cys-351 and Cys-378.

The protein belongs to the Ntn-hydrolase family. In terms of assembly, heterotetramer of two alpha and two beta chains arranged as a dimer of alpha/beta heterodimers. In terms of processing, cleaved into an alpha and beta chain by autocatalysis; this activates the enzyme. The N-terminal residue of the beta subunit is responsible for the nucleophile hydrolase activity.

The enzyme catalyses N(4)-(beta-N-acetyl-D-glucosaminyl)-L-asparagine + H2O = N-acetyl-beta-D-glucosaminylamine + L-aspartate + H(+). In terms of biological role, cleaves the GlcNAc-Asn bond which joins oligosaccharides to the peptide of asparagine-linked glycoproteins. The polypeptide is Putative N(4)-(beta-N-acetylglucosaminyl)-L-asparaginase GL17147 (Drosophila persimilis (Fruit fly)).